Here is a 446-residue protein sequence, read N- to C-terminus: Trigger factor (446 aa).

The region spanning 163-248 (GDRLVIDFEG…VKEIKKKNLL (86 aa)) is the PPIase FKBP-type domain.

This sequence belongs to the FKBP-type PPIase family. Tig subfamily.

The protein localises to the cytoplasm. It catalyses the reaction [protein]-peptidylproline (omega=180) = [protein]-peptidylproline (omega=0). Involved in protein export. Acts as a chaperone by maintaining the newly synthesized protein in an open conformation. Functions as a peptidyl-prolyl cis-trans isomerase. The chain is Trigger factor from Natranaerobius thermophilus (strain ATCC BAA-1301 / DSM 18059 / JW/NM-WN-LF).